The chain runs to 193 residues: Orotate phosphoribosyltransferase (193 aa).

A 5-phospho-alpha-D-ribose 1-diphosphate-binding site is contributed by 116 to 124 (EDVVTTGKS). Thr-120 and Arg-148 together coordinate orotate.

This sequence belongs to the purine/pyrimidine phosphoribosyltransferase family. PyrE subfamily. In terms of assembly, homodimer. Mg(2+) is required as a cofactor.

It catalyses the reaction orotidine 5'-phosphate + diphosphate = orotate + 5-phospho-alpha-D-ribose 1-diphosphate. The protein operates within pyrimidine metabolism; UMP biosynthesis via de novo pathway; UMP from orotate: step 1/2. Its function is as follows. Catalyzes the transfer of a ribosyl phosphate group from 5-phosphoribose 1-diphosphate to orotate, leading to the formation of orotidine monophosphate (OMP). The protein is Orotate phosphoribosyltransferase of Clostridium tetani (strain Massachusetts / E88).